The following is a 188-amino-acid chain: Large ribosomal subunit protein eL18 (188 aa).

The tract at residues 151-188 (HFGPAPGVPHSHTKPLVRSKGRKFERARGRRKSCGYKK) is disordered. Basic residues-rich tracts occupy residues 161–171 (SHTKPLVRSKG) and 178–188 (RGRRKSCGYKK).

Belongs to the eukaryotic ribosomal protein eL18 family.

The protein resides in the cytoplasm. The protein is Large ribosomal subunit protein eL18 (RpL18) of Lysiphlebus testaceipes (Greenbugs aphid parastoid).